Reading from the N-terminus, the 138-residue chain is Prefoldin subunit alpha (138 aa).

The protein belongs to the prefoldin subunit alpha family. As to quaternary structure, heterohexamer of two alpha and four beta subunits.

Its subcellular location is the cytoplasm. Its function is as follows. Molecular chaperone capable of stabilizing a range of proteins. Seems to fulfill an ATP-independent, HSP70-like function in archaeal de novo protein folding. In Methanococcoides burtonii (strain DSM 6242 / NBRC 107633 / OCM 468 / ACE-M), this protein is Prefoldin subunit alpha.